Reading from the N-terminus, the 596-residue chain is MLRRKRERRNAVKENEMVIDTPLEKRRTPGKPRATREPPISVVITGHSKGSEDDLISFVWRKVKVRLMNISYSPASVTAVVKSQDFSRLNGLNGAAFAGDHLAIRRVDGASNVTQDYRKAKTKRSFRSVSAPSLSALATQAQRNVSKTLPQSTNETIEKLRQFLQTRYQPATKFLDLGNLQQDPLLKQMGILAEASTKSKMFPALMKVASLNFPDVISVSLSDNNLQSVTAVTTLAQTWPKLLNLSLANNRITSLSDLDPWSPKTKLPELQELVLVGNPIVTTFANRAMDYQREMVSRFPKLRLLDGNSINSEIIASQSTVPFPVYQSFFDKVETEQIVNSFLAAFFKGWDENRSALVNQLYSPNATFSISLNASNVRTNFSQKTDTKKWGAYKMKSRNLLYSQSQKESKSRLFNGHEEISNAVKSLPATAHDLSDRSQWVFDGWNLVLPSVGAAIKIVVHGQFEEPQNKRLLRSFDRTLLILPGGSTGILIINDLLVIRSFAGSLGWLPGQSSVRTSNNAMSASASKPSDIVQPRPEQAMLDTRQQIVLKIKAETGLNDYYAHMCCEQNNWDYNSALASFLELKSRNVIPAEAFS.

3 positions are modified to phosphoserine: Ser-128, Ser-130, and Ser-133. LRR repeat units follow at residues 215-236, 241-262, and 263-282; these read DVIS…TTLA, KLLN…DPWS, and PKTK…PIVT. An LRRCT domain is found at 283–338; sequence TFANRAMDYQREMVSRFPKLRLLDGNSINSEIIASQSTVPFPVYQSFFDKVETEQI. One can recognise an NTF2 domain in the interval 338 to 499; that stretch reads IVNSFLAAFF…ILIINDLLVI (162 aa). The region spanning 543-596 is the TAP-C domain; sequence DTRQQIVLKIKAETGLNDYYAHMCCEQNNWDYNSALASFLELKSRNVIPAEAFS.

The protein belongs to the NXF family. In terms of assembly, interacts with mlo3 and rae1.

The protein localises to the nucleus. It localises to the cytoplasm. In terms of biological role, involved in the export of mRNA from the nucleus to the cytoplasm. The polypeptide is mRNA export factor mex67 (mex67) (Schizosaccharomyces pombe (strain 972 / ATCC 24843) (Fission yeast)).